Here is a 290-residue protein sequence, read N- to C-terminus: Iron-sulfur cluster carrier protein (290 aa).

47–54 (GKGGVGKS) is a binding site for ATP.

This sequence belongs to the Mrp/NBP35 ATP-binding proteins family. In terms of assembly, homodimer.

In terms of biological role, binds and transfers iron-sulfur (Fe-S) clusters to target apoproteins. Can hydrolyze ATP. The protein is Iron-sulfur cluster carrier protein of Methanocaldococcus jannaschii (strain ATCC 43067 / DSM 2661 / JAL-1 / JCM 10045 / NBRC 100440) (Methanococcus jannaschii).